The sequence spans 185 residues: MISSNDFRSGTTIEIDGSVWRVVEFLHVKPGKGSAFVRTKLKNVQTGNVVERTFRAGETLPSATIEKRTMQHTYKEGDQFVFMDMETFEEATLTPVQMGDRAKYLKEGMEVNILFWNDQVLDIELPTSVILEITDTDPGVKGDTATGGTKPAIVETGAQVMVPLFISIGERIKVDTRDGSYLGRE.

It belongs to the elongation factor P family.

It is found in the cytoplasm. It participates in protein biosynthesis; polypeptide chain elongation. Functionally, involved in peptide bond synthesis. Stimulates efficient translation and peptide-bond synthesis on native or reconstituted 70S ribosomes in vitro. Probably functions indirectly by altering the affinity of the ribosome for aminoacyl-tRNA, thus increasing their reactivity as acceptors for peptidyl transferase. The chain is Elongation factor P from Microcystis aeruginosa (strain NIES-843 / IAM M-2473).